The following is a 467-amino-acid chain: MSKFPTISEILSGKVAVGEEVAVRGWVRTRRDSKAGLSFLAVYDGSCFDPIQAIINNDLSNYQDEVLRLTAGCSVIVTGVIVESPAEGQAVELQAKSVEVVGWVEDPDTYPMAAKRHSIEYLREVAHLRPRTNLIGAVARVRHCLAQAIHRFFHEQGFYWVATPLITASDTEGAGEMFRVSTLDLENLPRGEDGKVDFSQDFFGRESFLTVSGQLNGETYACALSKVYTFGPTFRAENSNTTRHLAEFWMVEPEFAFATLADNAKLAEDMLKYVFRAVLEERKDDLKFFEKHIDNTVISRLENFINSDFAQIDYTDAIEVLLKSGKNFEFPVEWGIDLSSEHERFLAEEYFKSPVVVKNYPKDIKAFYMRLNDDGKTVAAMDVLAPGIGEIIGGSQREERLEVLDKRMVEMGLNPEDYWWYRDLRRYGTVPHSGFGLGFERLIVYVTGLQNIREVIPFPRAPRNANF.

Belongs to the class-II aminoacyl-tRNA synthetase family. In terms of assembly, homodimer.

The protein localises to the cytoplasm. The enzyme catalyses tRNA(Asn) + L-asparagine + ATP = L-asparaginyl-tRNA(Asn) + AMP + diphosphate + H(+). This is Asparagine--tRNA ligase from Glaesserella parasuis serovar 5 (strain SH0165) (Haemophilus parasuis).